A 357-amino-acid polypeptide reads, in one-letter code: Ubiquitin carboxyl-terminal hydrolase 2 (357 aa).

The USP domain occupies 19 to 351 (TGLRNLGNTC…DAYLLFYELA (333 aa)). The active-site Nucleophile is the cysteine 28. Cysteine 177, cysteine 180, cysteine 228, and cysteine 231 together coordinate Zn(2+). Residue histidine 309 is the Proton acceptor of the active site.

This sequence belongs to the peptidase C19 family. USP2 subfamily. In terms of assembly, homooligomer.

The protein localises to the cytoplasm. The protein resides in the perinuclear region. It catalyses the reaction Thiol-dependent hydrolysis of ester, thioester, amide, peptide and isopeptide bonds formed by the C-terminal Gly of ubiquitin (a 76-residue protein attached to proteins as an intracellular targeting signal).. Its function is as follows. Hydrolase that deubiquitinates polyubiquitinated target proteins such as MDM2, MDM4 and CCND1. Possesses both ubiquitin-specific peptidase and isopeptidase activities. May play a role in the regulation of the circadian clock. This Gallus gallus (Chicken) protein is Ubiquitin carboxyl-terminal hydrolase 2 (USP2).